We begin with the raw amino-acid sequence, 139 residues long: Large ribosomal subunit protein uL14A (139 aa).

This sequence belongs to the universal ribosomal protein uL14 family. As to quaternary structure, component of the large ribosomal subunit (LSU). Mature yeast ribosomes consist of a small (40S) and a large (60S) subunit. The 40S small subunit contains 1 molecule of ribosomal RNA (18S rRNA) and at least 33 different proteins. The large 60S subunit contains 3 rRNA molecules (25S, 5.8S and 5S rRNA) and at least 46 different proteins.

The protein resides in the cytoplasm. Its subcellular location is the nucleus. Its function is as follows. Component of the ribosome, a large ribonucleoprotein complex responsible for the synthesis of proteins in the cell. The small ribosomal subunit (SSU) binds messenger RNAs (mRNAs) and translates the encoded message by selecting cognate aminoacyl-transfer RNA (tRNA) molecules. The large subunit (LSU) contains the ribosomal catalytic site termed the peptidyl transferase center (PTC), which catalyzes the formation of peptide bonds, thereby polymerizing the amino acids delivered by tRNAs into a polypeptide chain. The nascent polypeptides leave the ribosome through a tunnel in the LSU and interact with protein factors that function in enzymatic processing, targeting, and the membrane insertion of nascent chains at the exit of the ribosomal tunnel. In Schizosaccharomyces pombe (strain 972 / ATCC 24843) (Fission yeast), this protein is Large ribosomal subunit protein uL14A (rpl2301).